We begin with the raw amino-acid sequence, 607 residues long: WD repeat-containing protein 1-B (607 aa).

13 WD repeats span residues 4–45 (EIKK…IRNI), 48–87 (PAIA…IWDT), 93–135 (LLKY…LWDT), 138–176 (SVGE…FFEG), 180–218 (KFKF…LYDG), 224–263 (VCSL…IWDV), 270–306 (TTFN…YLDK), 311–351 (KPFR…YWDA), 358–408 (TFTG…KMDV), 432–474 (LKDK…LYSI), 480–518 (KDEG…VFSV), 523–561 (SEHN…VWTL), and 566–604 (TRIK…QWTV).

This sequence belongs to the WD repeat AIP1 family.

The protein localises to the cell membrane. It is found in the cytoplasm. The protein resides in the cytoskeleton. It localises to the nucleus. In terms of biological role, induces disassembly of actin filaments in conjunction with ADF/cofilin family proteins. Doesn't sever actin filaments alone, but caps the barbed ends of filaments severed by cofilin, which blocks annealing and depolymerization and allows more extensive severing by cofilin. In Xenopus laevis (African clawed frog), this protein is WD repeat-containing protein 1-B (wdr1-b).